Here is a 90-residue protein sequence, read N- to C-terminus: Probable two-component-system connector protein YmgA (90 aa).

Residues 63 to 80 (SDSGGPNRRTATADNKSM) are compositionally biased toward polar residues. Residues 63 to 90 (SDSGGPNRRTATADNKSMFNGKKINRIH) form a disordered region.

In terms of biological role, probably a connector protein for RcsB/C regulation of biofilm formation, providing additional signal input into the two-component signaling pathway. May serve to stimulate biofilm maturation, probably via the Rcs phosphorelay. Mild overexpression at 16 degrees Celsius increases the production of colanic acid, an exopolysaccharide and matrix component, and reduces adhesive curli fimbriae expression. Both of these effects require RcsB. The sequence is that of Probable two-component-system connector protein YmgA (ymgA) from Escherichia coli (strain K12).